We begin with the raw amino-acid sequence, 64 residues long: Large ribosomal subunit protein bL32 (64 aa).

The segment at 1–35 (MAVQKSRVTPSRRGQRRSHDALTAKQLSTDPTSGE) is disordered.

This sequence belongs to the bacterial ribosomal protein bL32 family.

In Xanthomonas axonopodis pv. citri (strain 306), this protein is Large ribosomal subunit protein bL32.